The following is a 317-amino-acid chain: Small glutamine-rich tetratricopeptide repeat-containing protein 2 (317 aa).

TPR repeat units lie at residues 14-48 (LKQAITTGSISEEEKESLEVAAQCIQDSFKIKPEE), 83-116 (AEKLKLEGNNAIAAKDYQKALDLYTKAIEIDPTS), 118-150 (VYYSNRAAAYNQLGQFENAVEDALTCLSLDPHH), and 151-184 (ARAFGRLGRAKLSLGDAAAAADAYKKGLDFDPNN). Polar residues predominate over residues 198-215 (LNQPSDSSATSGADQART). 2 disordered regions span residues 198–224 (LNQPSDSSATSGADQARTSAGAAPDLG) and 298–317 (MNNNNNGNTDNNNQGNPPPQ).

Belongs to the SGT family.

It is found in the cytoplasm. Its subcellular location is the nucleus. In terms of biological role, co-chaperone that binds to the molecular chaperone Hsp70 and regulates Hsp70 ATPase activity. The protein is Small glutamine-rich tetratricopeptide repeat-containing protein 2 (sgt2) of Schizosaccharomyces pombe (strain 972 / ATCC 24843) (Fission yeast).